Here is a 144-residue protein sequence, read N- to C-terminus: D-aminoacyl-tRNA deacylase (144 aa).

A Gly-cisPro motif, important for rejection of L-amino acids motif is present at residues 136–137; it reads GP.

This sequence belongs to the DTD family. Homodimer.

The protein localises to the cytoplasm. The enzyme catalyses glycyl-tRNA(Ala) + H2O = tRNA(Ala) + glycine + H(+). It carries out the reaction a D-aminoacyl-tRNA + H2O = a tRNA + a D-alpha-amino acid + H(+). An aminoacyl-tRNA editing enzyme that deacylates mischarged D-aminoacyl-tRNAs. Also deacylates mischarged glycyl-tRNA(Ala), protecting cells against glycine mischarging by AlaRS. Acts via tRNA-based rather than protein-based catalysis; rejects L-amino acids rather than detecting D-amino acids in the active site. By recycling D-aminoacyl-tRNA to D-amino acids and free tRNA molecules, this enzyme counteracts the toxicity associated with the formation of D-aminoacyl-tRNA entities in vivo and helps enforce protein L-homochirality. This is D-aminoacyl-tRNA deacylase from Haemophilus ducreyi (strain 35000HP / ATCC 700724).